The following is a 925-amino-acid chain: Glutamate receptor 3.1 (925 aa).

An N-terminal signal peptide occupies residues 1–25 (MLSSMNWVLLSFIIVLGGGLLLSEG). Topologically, residues 26-591 (ASSSRPPVIK…NPWAFLRPFT (566 aa)) are extracellular. Asn309, Asn341, Asn359, Asn419, Asn437, and Asn488 each carry an N-linked (GlcNAc...) asparagine glycan. The chain crosses the membrane as a helical span at residues 592–612 (LPMWAVTASFFVIVGAAIWIL). The Cytoplasmic portion of the chain corresponds to 613-621 (EHRINDEFR). The helical transmembrane segment at 622-642 (GPPRRQIITILWFTFSTMFFS) threads the bilayer. Residues 643-653 (HRETTVSTLGR) are Cytoplasmic-facing. Residues 654–674 (MVLLIWLFVVLIITSSYTASL) traverse the membrane as a helical segment. Topologically, residues 675–831 (TSILTVQQLN…GDSEQLNVHS (157 aa)) are extracellular. N-linked (GlcNAc...) asparagine glycosylation is found at Asn738 and Asn812. A helical membrane pass occupies residues 832–852 (FWGMFLVVGIACLVALFIHFF). The Cytoplasmic segment spans residues 853 to 925 (KIIRDFCKDT…ISRTASRRPI (73 aa)). Residues 897–925 (KRRLKRKRNNDHSMNANSIISRTASRRPI) are disordered. The segment covering 908–919 (HSMNANSIISRT) has biased composition (polar residues).

This sequence belongs to the glutamate-gated ion channel (TC 1.A.10.1) family. As to quaternary structure, may form heteromers. As to expression, expressed predominantly in roots. Firt detected in the vascular tissues of the cotyledons, and later in the vasculature of all organs. In leaves, preferentially expressed in guard cells.

It is found in the membrane. In terms of biological role, glutamate-gated receptor that probably acts as a non-selective cation channel. May be involved in light-signal transduction and calcium homeostasis via the regulation of calcium influx into cells. Required for the long-term calcium oscillation-regulated stomatal movements. This is Glutamate receptor 3.1 (GLR3.1) from Arabidopsis thaliana (Mouse-ear cress).